Here is a 182-residue protein sequence, read N- to C-terminus: Ribosome-recycling factor (182 aa).

The protein belongs to the RRF family.

It localises to the cytoplasm. Its function is as follows. Responsible for the release of ribosomes from messenger RNA at the termination of protein biosynthesis. May increase the efficiency of translation by recycling ribosomes from one round of translation to another. The chain is Ribosome-recycling factor from Synechococcus sp. (strain CC9605).